The sequence spans 47 residues: Large ribosomal subunit protein bL34 (47 aa).

This sequence belongs to the bacterial ribosomal protein bL34 family.

This is Large ribosomal subunit protein bL34 from Nocardia farcinica (strain IFM 10152).